Reading from the N-terminus, the 990-residue chain is Leucine--tRNA ligase (990 aa).

The 'HIGH' region motif lies at 74 to 85 (PYPSGKGLHVGH). Positions 573-602 (LPINLPDVPDYSPKTFDPEDAESDPEAPLS) are disordered. The 'KMSKS' region signature appears at 763–767 (KMGKS). Residue Lys766 participates in ATP binding.

Belongs to the class-I aminoacyl-tRNA synthetase family.

Its subcellular location is the cytoplasm. The enzyme catalyses tRNA(Leu) + L-leucine + ATP = L-leucyl-tRNA(Leu) + AMP + diphosphate. This Bifidobacterium adolescentis (strain ATCC 15703 / DSM 20083 / NCTC 11814 / E194a) protein is Leucine--tRNA ligase.